Here is a 403-residue protein sequence, read N- to C-terminus: Alkaline protease 1 (403 aa).

Residues 1 to 21 form the signal peptide; it reads MQSIKRTLLLLGAVLPAVLAG. Positions 22–121 are excised as a propeptide; that stretch reads PIFPHRRAPT…VEEDQVWHLF (100 aa). The 85-residue stretch at 36 to 120 folds into the Inhibitor I9 domain; it reads KYIVTFKSDV…AVEEDQVWHL (85 aa). One can recognise a Peptidase S8 domain in the interval 130-403; sequence PWGLGSISHK…PNLLAYNGNA (274 aa). Residues Asp162 and His193 each act as charge relay system in the active site. 2 N-linked (GlcNAc...) asparagine glycosylation sites follow: Asn253 and Asn309. Residue Ser349 is the Charge relay system of the active site.

It belongs to the peptidase S8 family.

The protein resides in the secreted. It carries out the reaction Hydrolysis of proteins with broad specificity, and of Bz-Arg-OEt &gt; Ac-Tyr-OEt. Does not hydrolyze peptide amides.. Its function is as follows. Secreted alkaline protease that allows assimilation of proteinaceous substrates. The protein is Alkaline protease 1 (alp1) of Aspergillus flavus.